A 158-amino-acid chain; its full sequence is Ribosome maturation factor RimP (158 aa).

The protein belongs to the RimP family.

It localises to the cytoplasm. Required for maturation of 30S ribosomal subunits. This is Ribosome maturation factor RimP from Lactobacillus delbrueckii subsp. bulgaricus (strain ATCC 11842 / DSM 20081 / BCRC 10696 / JCM 1002 / NBRC 13953 / NCIMB 11778 / NCTC 12712 / WDCM 00102 / Lb 14).